Reading from the N-terminus, the 153-residue chain is Cytochrome c-type biogenesis protein CcmE (153 aa).

Topologically, residues 1-8 (MMTPRQRR) are cytoplasmic. The chain crosses the membrane as a helical; Signal-anchor for type II membrane protein span at residues 9–29 (MTWVALMVAGVSLAAFFALTA). Topologically, residues 30–153 (FQKNLLYFYT…PADYSEYRKK (124 aa)) are periplasmic. H124 and Y128 together coordinate heme. The interval 134–153 (AESLKKNGGLPADYSEYRKK) is disordered.

It belongs to the CcmE/CycJ family.

The protein resides in the cell inner membrane. Heme chaperone required for the biogenesis of c-type cytochromes. Transiently binds heme delivered by CcmC and transfers the heme to apo-cytochromes in a process facilitated by CcmF and CcmH. This is Cytochrome c-type biogenesis protein CcmE from Methylococcus capsulatus (strain ATCC 33009 / NCIMB 11132 / Bath).